A 339-amino-acid chain; its full sequence is 1-aminocyclopropane-1-carboxylate deaminase (339 aa).

An N6-(pyridoxal phosphate)lysine modification is found at lysine 52. Serine 79 acts as the Nucleophile in catalysis.

Belongs to the ACC deaminase/D-cysteine desulfhydrase family. In terms of assembly, homotrimer. Pyridoxal 5'-phosphate serves as cofactor.

It catalyses the reaction 1-aminocyclopropane-1-carboxylate + H2O = 2-oxobutanoate + NH4(+). Functionally, catalyzes a cyclopropane ring-opening reaction, the irreversible conversion of 1-aminocyclopropane-1-carboxylate (ACC) to ammonia and alpha-ketobutyrate. Allows growth on ACC as a nitrogen source. The polypeptide is 1-aminocyclopropane-1-carboxylate deaminase (Bradyrhizobium sp. (strain BTAi1 / ATCC BAA-1182)).